The sequence spans 175 residues: Avenin-like a7 (175 aa).

The signal sequence occupies residues 1–19 (MKTMFILALLAFTATSAVA).

This sequence belongs to the prolamin family. Post-translationally, contains 7 disulfide bonds.

In terms of biological role, seed storage protein. Not integrated in the gluten polymer through disulfide bonds, unless incorporated by reduction and reoxidation during dough making. Increases dough strength and bread volume, but decreases dough stability when added into a base wheat flour. The polypeptide is Avenin-like a7 (Triticum aestivum (Wheat)).